The following is a 376-amino-acid chain: Erythronate-4-phosphate dehydrogenase (376 aa).

Positions 45 and 67 each coordinate substrate. NAD(+) contacts are provided by residues 127 to 128, D147, and T176; that span reads QV. Residue R209 is part of the active site. D233 provides a ligand contact to NAD(+). The active site involves E238. H255 functions as the Proton donor in the catalytic mechanism. G258 contributes to the NAD(+) binding site. Residue Y259 coordinates substrate.

Belongs to the D-isomer specific 2-hydroxyacid dehydrogenase family. PdxB subfamily. As to quaternary structure, homodimer.

It localises to the cytoplasm. It catalyses the reaction 4-phospho-D-erythronate + NAD(+) = (R)-3-hydroxy-2-oxo-4-phosphooxybutanoate + NADH + H(+). It participates in cofactor biosynthesis; pyridoxine 5'-phosphate biosynthesis; pyridoxine 5'-phosphate from D-erythrose 4-phosphate: step 2/5. In terms of biological role, catalyzes the oxidation of erythronate-4-phosphate to 3-hydroxy-2-oxo-4-phosphonooxybutanoate. The polypeptide is Erythronate-4-phosphate dehydrogenase (Aliivibrio fischeri (strain ATCC 700601 / ES114) (Vibrio fischeri)).